The primary structure comprises 648 residues: MVKVTDIVLWDKPGERVLLLGNQAIVRGALEGNIGVYAAYPGTPSSEITDTMAAVASRAGVYMEYSTNEKVAFETALSASWAGLRAMTAMKHVGLNVAMDSFMTVSYMGVNGGLVVVVADDPSMWSSQNEQDTRAIAKFANIPVLEPSSVQEAKDMVKYAFEISEKYGQMVILRTTTRSSHMRGDVVLGELPQEIKEGKRKFGDFKKNPERYVDIPAFQRPKHKWLLETIEKFREEFNNSPFNWIEGPEDAKVGIIAPGLSYAYVKEALAWLGVDNVKVLKLGTPFPVPYGLLEKFFQGLERVLIVEELEPVVEEQVKVWAFDKGINVEIHGKDLVPRVYEMTTRRAVEAIAKFLGLETPINFEEIDEKYKKVQEIVPPRPPSLCPACPHRNTFFALRKAATPRAIYPSDIGCYTLGVLPPLKTVDTTIAMGGSIGVAHGLSIALNGSIAEEQRKTGKGKKIIAATIGDSTFFHTGLPALANAIYNRSNVLIVVLDNLVTAMTGDQPNPGTGETPHGPGKRILIEEVAKAMGADFVAVVDPYDIKETYETFKKALEVEGVSVVVARRACALYRIGQLRRAGKQWPIYQVNEDKCTGCKICINAYGCPAIYWDPEKKKAKVDPLMCWGCGGCAQVCPFDAFEKVREGEL.

2 consecutive 4Fe-4S ferredoxin-type domains span residues 585-614 and 616-645; these read PIYQ…WDPE and KKAK…KVRE. 8 residues coordinate [4Fe-4S] cluster: Cys-594, Cys-597, Cys-600, Cys-606, Cys-625, Cys-628, Cys-631, and Cys-635.

As to quaternary structure, heterodimer of the IorA and IorB subunits. Requires [4Fe-4S] cluster as cofactor.

The catalysed reaction is indole-3-pyruvate + 2 oxidized [2Fe-2S]-[ferredoxin] + CoA = (indol-3-yl)acetyl-CoA + 2 reduced [2Fe-2S]-[ferredoxin] + CO2 + H(+). Catalyzes the ferredoxin-dependent oxidative decarboxylation of arylpyruvates. This is Indolepyruvate oxidoreductase subunit IorA (iorA) from Pyrococcus abyssi (strain GE5 / Orsay).